Reading from the N-terminus, the 508-residue chain is MSSHPKVKKAIERATDPGLRVDNWGYLIEVCDLVKVDAEDRGQYAMKIIEERLLKQDANMILRTLSLVVALAENCGSRLQQAISSKHFTGILYKIVDDSQVHVAVKREVLKVVHQLADSFKNDPSLKYMHDLESKIKISHPELISEPRVPKKKEMSKDREVEEEKELAEALRLSLLEFEKTGSRQQVQQPQQQQQQQQQQQQQQQQKLYPQNAEAQQQQAPTVIRKVRAMYDFNSTEQDELSFKKGDLICVVEQVYRDWWRGTLAGSVGIFPLNYVTPVTEPSQQELAAERAKDEQVFAQKDNVDRLQNKLREAGNADITQDQEINDLYGSVSPIRPQISKMLGKYAQKKEDLVSLRQILANAEITYNQLLSRASNAYAYSAPPPAPMTGPAPTPGPQSPMSPTAQYTSPTNTQTQMNGIPNPPYSYPLPQQTQQIQQSEQTQQPLSQINSPQNYASSVGNTNYTGTNHIPQPLAPYPQYTGMSMQSIPPQQPQMPQHYNMSSNSNAQ.

The region spanning 14–144 (ATDPGLRVDN…KIKISHPELI (131 aa)) is the VHS domain. A compositionally biased stretch (basic and acidic residues) spans 143–162 (LISEPRVPKKKEMSKDREVE). A disordered region spans residues 143 to 163 (LISEPRVPKKKEMSKDREVEE). Residues 162–181 (EEEKELAEALRLSLLEFEKT) form the UIM domain. The SH3 domain maps to 222–281 (TVIRKVRAMYDFNSTEQDELSFKKGDLICVVEQVYRDWWRGTLAGSVGIFPLNYVTPVTE). Over residues 385 to 400 (PAPMTGPAPTPGPQSP) the composition is skewed to pro residues. The segment at 385-508 (PAPMTGPAPT…YNMSSNSNAQ (124 aa)) is disordered. Polar residues predominate over residues 401 to 419 (MSPTAQYTSPTNTQTQMNG). Residues 429–449 (LPQQTQQIQQSEQTQQPLSQI) are compositionally biased toward low complexity. Over residues 450 to 470 (NSPQNYASSVGNTNYTGTNHI) the composition is skewed to polar residues. Residues 483–497 (MSMQSIPPQQPQMPQ) are compositionally biased toward low complexity. The span at 499 to 508 (YNMSSNSNAQ) shows a compositional bias: polar residues.

Belongs to the STAM family. As to quaternary structure, component of the ESCRT-0 complex composed of HSE1 and VPS27.

The protein resides in the endosome membrane. In terms of biological role, component of the ESCRT-0 complex which is the sorting receptor for ubiquitinated cargo proteins at the multivesicular body (MVB). The polypeptide is Class E vacuolar protein-sorting machinery protein HSE1 (HSE1) (Kluyveromyces lactis (strain ATCC 8585 / CBS 2359 / DSM 70799 / NBRC 1267 / NRRL Y-1140 / WM37) (Yeast)).